Reading from the N-terminus, the 277-residue chain is MEMO1 family protein MTH_45 (277 aa).

Belongs to the MEMO1 family.

The chain is MEMO1 family protein MTH_45 from Methanothermobacter thermautotrophicus (strain ATCC 29096 / DSM 1053 / JCM 10044 / NBRC 100330 / Delta H) (Methanobacterium thermoautotrophicum).